Here is a 377-residue protein sequence, read N- to C-terminus: Gap junction gamma-1 protein (377 aa).

The Cytoplasmic segment spans residues 1–18; the sequence is MSWSFLTRLLEEINNHST. A helical transmembrane segment spans residues 19 to 39; sequence FVGKVWLTVLIIFRIVLTAVG. Residues 40–75 lie on the Extracellular side of the membrane; the sequence is GESIYYDEQSKFTCNTQQPGCENVCYDAFAPLSHVR. The helical transmembrane segment at 76–96 threads the bilayer; it reads FWVFQIILITTPSIMYLGFAM. Over 97-174 the chain is Cytoplasmic; the sequence is HRIARQPEMQ…RRIKQDGLMK (78 aa). Positions 129 to 163 are disordered; sequence DYEEAEDNQEEDPMICEEEEPEKDSEKGDKKKHDG. The span at 131 to 151 shows a compositional bias: acidic residues; it reads EEAEDNQEEDPMICEEEEPEK. A helical transmembrane segment spans residues 175–197; it reads VYVLQLLFRSVFEVGFLMGQYIL. Residues 198–228 are Extracellular-facing; sequence YGFEVIPFFVCSRKPCPHTVDCFVSRPTEKT. The helical transmembrane segment at 229 to 249 threads the bilayer; it reads IFLLIMYAVSALCLFLNLCEL. Topologically, residues 250–377 are cytoplasmic; sequence FHLGIGGIRD…GVGNREKSGL (128 aa). Disordered regions lie at residues 265-294 and 334-377; these read KKEL…LPNG and LNPT…KSGL. Polar residues predominate over residues 337–362; it reads TGDNTHASRSSSPESNSIAAEQNRLN.

Belongs to the connexin family. Gamma-type subfamily. As to quaternary structure, a connexon is composed of a hexamer of connexins.

The protein localises to the cell membrane. It is found in the cell junction. It localises to the gap junction. Functionally, one gap junction consists of a cluster of closely packed pairs of transmembrane channels, the connexons, through which materials of low MW diffuse from one cell to a neighboring cell. This is Gap junction gamma-1 protein (gjc1) from Xenopus tropicalis (Western clawed frog).